A 679-amino-acid polypeptide reads, in one-letter code: Stress-70 protein, mitochondrial (679 aa).

The N-terminal 46 residues, 1–46 (MISASRAAAARLVGTAASRSPAAARPQDGWNGLSHEAFRFVSRRDY), are a transit peptide targeting the mitochondrion. The tract at residues 1–432 (MISASRAAAA…IQGGVLAGDV (432 aa)) is interaction with NFS1. T63 and N64 together coordinate ADP. Residues 63–431 (TNSCVAVMEG…AIQGGVLAGD (369 aa)) form a nucleotide-binding domain (NBD) region. The residue at position 76 (K76) is an N6-acetyllysine. Residue T87 is modified to Phosphothreonine. N6-acetyllysine; alternate occurs at positions 135 and 138. N6-succinyllysine; alternate is present on residues K135 and K138. K143 is subject to N6-acetyllysine. K206 carries the N6-acetyllysine; alternate modification. N6-succinyllysine; alternate is present on K206. K206 is modified (N6-malonyllysine; alternate). An N6-acetyllysine mark is found at K234 and K288. K300 carries the post-translational modification N6-acetyllysine; alternate. K300 carries the post-translational modification N6-succinyllysine; alternate. 3 residues coordinate ADP: E313, K316, and S320. K360 is subject to N6-acetyllysine; alternate. K360 is modified (N6-succinyllysine; alternate). N6-succinyllysine is present on K368. Positions 388 and 391 each coordinate ADP. K394 bears the N6-succinyllysine mark. S408 bears the Phosphoserine mark. An interdomain linker region spans residues 432-441 (VTDVLLLDVT). Residues 432–679 (VTDVLLLDVT…QKEDQKEEKQ (248 aa)) form an interaction with FXN and ISCU region. The interval 442–679 (PLSLGIETLG…QKEDQKEEKQ (238 aa)) is substrate-binding domain (SBD). R513 carries the omega-N-methylarginine modification. Residues K567 and K600 each carry the N6-acetyllysine; alternate modification. 2 positions are modified to N6-succinyllysine; alternate: K567 and K600. N6-succinyllysine is present on K610. The residue at position 612 (K612) is an N6-acetyllysine. N6-acetyllysine; alternate is present on K646. At K646 the chain carries N6-succinyllysine; alternate. Residues 656–679 (ASEREGSGSSGTGEQKEDQKEEKQ) form a disordered region. A compositionally biased stretch (basic and acidic residues) spans 669-679 (EQKEDQKEEKQ).

The protein belongs to the heat shock protein 70 family. Interacts strongly with the intermediate form of FXN and weakly with its mature form. Interacts with HSCB. Associates with the mitochondrial contact site and cristae organizing system (MICOS) complex, composed of at least MICOS10/MIC10, CHCHD3/MIC19, CHCHD6/MIC25, APOOL/MIC27, IMMT/MIC60, APOO/MIC23/MIC26 and QIL1/MIC13. This complex was also known under the names MINOS or MitOS complex. The MICOS complex associates with mitochondrial outer membrane proteins SAMM50, MTX1, MTX2 and DNAJC11, mitochondrial inner membrane protein TMEM11 and with HSPA9. Interacts with DNLZ, the interaction is required to prevent self-aggregation. Interacts with TESPA1. Interacts with PDPN. Interacts with NFU1, NFS1 and ISCU. Interacts with TP53; the interaction promotes TP53 degradation. Interacts (via SBD domain) with UBXN2A; the interaction with UBXN2A inhibits HSPA9/MOT-2 interaction with and degradation of TP53, thereby promotes TP53 translocation to the nucleus. Interacts with ITPR1 AND VDAC1; this interaction couples ITPR1 to VDAC1. Component of the TIM23 mitochondrial inner membrane pre-sequence translocase complex.

The protein localises to the mitochondrion. It localises to the nucleus. Its subcellular location is the nucleolus. The protein resides in the cytoplasm. It is found in the mitochondrion matrix. It catalyses the reaction ATP + H2O = ADP + phosphate + H(+). With respect to regulation, the chaperone activity is regulated by ATP-induced allosteric coupling of the nucleotide-binding (NBD) and substrate-binding (SBD) domains. ATP binding in the NBD leads to a conformational change in the NBD, which is transferred through the interdomain linker (IDL) to the substrate-binding domain (SBD). This elicits a reduced substrate affinity and a faster substrate exchange rate. Upon hydrolysis of ATP to ADP, the protein undergoes a conformational change that increases its affinity for substrate proteins. It cycles through repeated phases of ATP hydrolysis and nucleotide exchange, facilitating repeated cycles of substrate binding and release. Functions in collaboration with co-chaperones. Functions with the co-chaperone, DNLZ, to maintain solubility and regulate ATP hydrolysis. Nucleotide exchange factors, GRPEL1 and GRPEL2, accelerate nucleotide exchange. Its function is as follows. Mitochondrial chaperone that plays a key role in mitochondrial protein import, folding, and assembly. Plays an essential role in the protein quality control system, the correct folding of proteins, the re-folding of misfolded proteins, and the targeting of proteins for subsequent degradation. These processes are achieved through cycles of ATP binding, ATP hydrolysis, and ADP release, mediated by co-chaperones. In mitochondria, it associates with the TIM (translocase of the inner membrane) protein complex to assist in the import and folding of mitochondrial proteins. Plays an important role in mitochondrial iron-sulfur cluster (ISC) biogenesis. Interacts with and stabilizes ISC cluster assembly proteins FXN, NFU1, NFS1 and ISCU. Regulates erythropoiesis via stabilization of ISC assembly. Regulates mitochondrial calcium-dependent apoptosis by coupling two calcium channels, ITPR1 and VDAC1, at the mitochondria-associated endoplasmic reticulum (ER) membrane to facilitate calcium transport from the ER lumen to the mitochondria intermembrane space, providing calcium for the downstream calcium channel MCU, which releases it into the mitochondrial matrix. Although primarily located in the mitochondria, it is also found in other cellular compartments. In the cytosol, it associates with proteins involved in signaling, apoptosis, or senescence. It may play a role in cell cycle regulation via its interaction with and promotion of degradation of TP53. May play a role in the control of cell proliferation and cellular aging. Protects against reactive oxygen species (ROS). Extracellular HSPA9 plays a cytoprotective role by preventing cell lysis following immune attack by the membrane attack complex by disrupting formation of the complex. This Mus musculus (Mouse) protein is Stress-70 protein, mitochondrial.